Reading from the N-terminus, the 134-residue chain is Small ribosomal subunit protein uS11 (134 aa).

Residues 114 to 134 form a disordered region; the sequence is TPVPHNGTRPPRKWFKRQEKR. Positions 123 to 134 are enriched in basic residues; sequence PPRKWFKRQEKR.

It belongs to the universal ribosomal protein uS11 family. In terms of assembly, part of the 30S ribosomal subunit. Interacts with proteins S7 and S18. Binds to IF-3.

In terms of biological role, located on the platform of the 30S subunit, it bridges several disparate RNA helices of the 16S rRNA. Forms part of the Shine-Dalgarno cleft in the 70S ribosome. The chain is Small ribosomal subunit protein uS11 from Mesomycoplasma hyopneumoniae (strain 232) (Mycoplasma hyopneumoniae).